A 63-amino-acid chain; its full sequence is Metallothionein (63 aa).

The interval 1-30 (MDPQDCTCAAGDSCSCAGSCKCKNCRCRSC) is beta. A divalent metal cation contacts are provided by C6, C8, C14, C16, C20, C22, C25, C27, C30, C34, C35, C37, C38, C42, C45, C49, C51, C59, C61, and C62. The tract at residues 31-63 (RKSCCSCCPAGCNNCAKGCVCKEPASSKCSCCH) is alpha.

It belongs to the metallothionein superfamily. Type 1 family.

Metallothioneins have a high content of cysteine residues that bind various heavy metals. This chain is Metallothionein, found in Anas platyrhynchos (Mallard).